Reading from the N-terminus, the 450-residue chain is ATP-dependent protease ATPase subunit HslU (450 aa).

ATP-binding positions include V29, 71–76, D261, E328, and R400; that span reads GVGKTE.

Belongs to the ClpX chaperone family. HslU subfamily. A double ring-shaped homohexamer of HslV is capped on each side by a ring-shaped HslU homohexamer. The assembly of the HslU/HslV complex is dependent on binding of ATP.

It localises to the cytoplasm. Functionally, ATPase subunit of a proteasome-like degradation complex; this subunit has chaperone activity. The binding of ATP and its subsequent hydrolysis by HslU are essential for unfolding of protein substrates subsequently hydrolyzed by HslV. HslU recognizes the N-terminal part of its protein substrates and unfolds these before they are guided to HslV for hydrolysis. In Rickettsia akari (strain Hartford), this protein is ATP-dependent protease ATPase subunit HslU.